Reading from the N-terminus, the 468-residue chain is MATRGSGPRAPRLLLLVQLVAGRCGLAGAAGGAQRGLSEPSSIAKHEDSLLKDLFQDYERWVRPVEHLNDKIKIKFGLAISQLVDVDEKNQLMTTNVWLKQEWIDVKLRWNPDDYGGIKVIRVPSDSVWTPDIVLFDNADGRFEGTSTKTVIRYNGTVTWTPPANYKSSCTIDVTFFPFDLQNCSMKFGSWTYDGSQVDIILEDQDVDKRDFFDNGEWEIVSATGSKGNRTDSCCWYPYVTYSFVIKRLPLFYTLFLIIPCIGLSFLTVLVFYLPSNEGEKICLCTSVLVSLTVFLLVIEEIIPSSSKVIPLIGEYLVFTMIFVTLSIMVTVFAINIHHRSSSTHNAMAPWVRKIFLHTLPKLLCMRSHVDRYFTQKEETESGSGPKSSRNTLEAALDSVRCITRHIMKENDVREVVEDWKFIAQVLDRMFLWTFLFVSIVGSLGLFVPVIYKWANILIPVHIGNANK.

An N-terminal signal peptide occupies residues 1 to 22; that stretch reads MATRGSGPRAPRLLLLVQLVAG. Residues 23–254 are Extracellular-facing; it reads RCGLAGAAGG…VIKRLPLFYT (232 aa). N-linked (GlcNAc...) asparagine glycans are attached at residues Asn155, Asn183, and Asn229. Cysteines 170 and 184 form a disulfide. Cys234 and Cys235 form a disulfide bridge. 3 helical membrane-spanning segments follow: residues 255-275, 282-302, and 317-337; these read LFLI…FYLP, ICLC…IEEI, and LVFT…AINI. Residues 338-429 lie on the Cytoplasmic side of the membrane; the sequence is HHRSSSTHNA…WKFIAQVLDR (92 aa). The helical transmembrane segment at 430 to 451 threads the bilayer; sequence MFLWTFLFVSIVGSLGLFVPVI. The Extracellular portion of the chain corresponds to 452–468; that stretch reads YKWANILIPVHIGNANK.

This sequence belongs to the ligand-gated ion channel (TC 1.A.9) family. Acetylcholine receptor (TC 1.A.9.1) subfamily. Alpha-5/CHRNA5 sub-subfamily. Neuronal AChR that forms heteropentamers composed of two different type of subunits: alpha and non-alpha (beta). CHRNA5/alpha-5 subunit is only able to form functional nAChRs when co-assembled with another alpha subunit, can be combined to CHRNA4/alpha-4 or CHRNA3/alpha-3 and CHRNB4/beta-4 or CHRNB2/beta-2 to give rise to functional receptors. Interacts with LYPD6.

The protein localises to the synaptic cell membrane. It is found in the cell membrane. It catalyses the reaction Ca(2+)(in) = Ca(2+)(out). The catalysed reaction is K(+)(in) = K(+)(out). The enzyme catalyses Na(+)(in) = Na(+)(out). Activated by a myriad of ligands such as acetylcholine, cytisine, nicotine, choline and epibatidine. In terms of biological role, component of neuronal acetylcholine receptors (nAChRs) that function as pentameric, ligand-gated cation channels with high calcium permeability among other activities. nAChRs are excitatory neurotrasnmitter receptors formed by a collection of nAChR subunits known to mediate synaptic transmission in the nervous system and the neuromuscular junction. Each nAchR subunit confers differential attributes to channel properties, including activation, deactivation and desensitization kinetics, pH sensitivity, cation permeability, and binding to allosteric modulators. Has an accessory rather than functional role and is only able to form functional nAChRs when co-assembled with another beta subunit. Participates in pentameric assemblies along with CHRNA3, CHRNA4, CHRNB2 and CHRNB4. Increases receptor sensitivity to acetylcholine and nicotine when associated with CHRNA4 and CHRNB2. Plays a role in nicotine addiction. The polypeptide is Neuronal acetylcholine receptor subunit alpha-5 (CHRNA5) (Pan troglodytes (Chimpanzee)).